Reading from the N-terminus, the 317-residue chain is Transaldolase 2 (317 aa).

The Schiff-base intermediate with substrate role is filled by Lys132.

This sequence belongs to the transaldolase family. Type 1 subfamily. In terms of assembly, homodimer.

The protein localises to the cytoplasm. It carries out the reaction D-sedoheptulose 7-phosphate + D-glyceraldehyde 3-phosphate = D-erythrose 4-phosphate + beta-D-fructose 6-phosphate. It participates in carbohydrate degradation; pentose phosphate pathway; D-glyceraldehyde 3-phosphate and beta-D-fructose 6-phosphate from D-ribose 5-phosphate and D-xylulose 5-phosphate (non-oxidative stage): step 2/3. In terms of biological role, transaldolase is important for the balance of metabolites in the pentose-phosphate pathway. This Pectobacterium atrosepticum (strain SCRI 1043 / ATCC BAA-672) (Erwinia carotovora subsp. atroseptica) protein is Transaldolase 2.